We begin with the raw amino-acid sequence, 485 residues long: Cobyric acid synthase (485 aa).

Residues 250–436 (RRIVACPILP…IHGLLASPAL (187 aa)) enclose the GATase cobBQ-type domain. The active-site Nucleophile is the Cys-332. His-428 is a catalytic residue.

It belongs to the CobB/CobQ family. CobQ subfamily.

The protein operates within cofactor biosynthesis; adenosylcobalamin biosynthesis. Catalyzes amidations at positions B, D, E, and G on adenosylcobyrinic A,C-diamide. NH(2) groups are provided by glutamine, and one molecule of ATP is hydrogenolyzed for each amidation. The polypeptide is Cobyric acid synthase (Sphingopyxis alaskensis (strain DSM 13593 / LMG 18877 / RB2256) (Sphingomonas alaskensis)).